The primary structure comprises 345 residues: Aspartate--ammonia ligase (345 aa).

It belongs to the class-II aminoacyl-tRNA synthetase family. AsnA subfamily.

The protein resides in the cytoplasm. The catalysed reaction is L-aspartate + NH4(+) + ATP = L-asparagine + AMP + diphosphate + H(+). The protein operates within amino-acid biosynthesis; L-asparagine biosynthesis; L-asparagine from L-aspartate (ammonia route): step 1/1. The protein is Aspartate--ammonia ligase of Bacteroides fragilis (strain ATCC 25285 / DSM 2151 / CCUG 4856 / JCM 11019 / LMG 10263 / NCTC 9343 / Onslow / VPI 2553 / EN-2).